The chain runs to 303 residues: Dihydroorotate dehydrogenase B (NAD(+)), catalytic subunit (303 aa).

Residues Ser-23 and 47-48 (KS) each bind FMN. Substrate contacts are provided by residues Lys-47, 71–75 (NAMGL), and Asn-125. An FMN-binding site is contributed by Asn-125. The active-site Nucleophile is the Cys-128. Residues Lys-163 and Ile-189 each coordinate FMN. 190–191 (NT) contacts substrate. Residues Gly-215, 241-242 (GG), and 263-264 (GT) contribute to the FMN site.

This sequence belongs to the dihydroorotate dehydrogenase family. Type 1 subfamily. Heterotetramer of 2 PyrK and 2 PyrD type B subunits. The cofactor is FMN.

It is found in the cytoplasm. It carries out the reaction (S)-dihydroorotate + NAD(+) = orotate + NADH + H(+). The protein operates within pyrimidine metabolism; UMP biosynthesis via de novo pathway; orotate from (S)-dihydroorotate (NAD(+) route): step 1/1. Functionally, catalyzes the conversion of dihydroorotate to orotate with NAD(+) as electron acceptor. This chain is Dihydroorotate dehydrogenase B (NAD(+)), catalytic subunit (pyrD), found in Pyrococcus horikoshii (strain ATCC 700860 / DSM 12428 / JCM 9974 / NBRC 100139 / OT-3).